Reading from the N-terminus, the 338-residue chain is Lipoate-protein ligase A (338 aa).

The BPL/LPL catalytic domain occupies 29–216; it reads PATQRVLFLW…AFFAHYGERV (188 aa). Residues arginine 71, 76-79, and lysine 134 contribute to the ATP site; that span reads GAVF. (R)-lipoate is bound at residue lysine 134.

The protein belongs to the LplA family. In terms of assembly, monomer.

It is found in the cytoplasm. The enzyme catalyses L-lysyl-[lipoyl-carrier protein] + (R)-lipoate + ATP = N(6)-[(R)-lipoyl]-L-lysyl-[lipoyl-carrier protein] + AMP + diphosphate + H(+). It participates in protein modification; protein lipoylation via exogenous pathway; protein N(6)-(lipoyl)lysine from lipoate: step 1/2. It functions in the pathway protein modification; protein lipoylation via exogenous pathway; protein N(6)-(lipoyl)lysine from lipoate: step 2/2. Its function is as follows. Catalyzes both the ATP-dependent activation of exogenously supplied lipoate to lipoyl-AMP and the transfer of the activated lipoyl onto the lipoyl domains of lipoate-dependent enzymes. The chain is Lipoate-protein ligase A from Salmonella typhimurium (strain LT2 / SGSC1412 / ATCC 700720).